The following is a 612-amino-acid chain: Rhotekin-2 (612 aa).

Residues 3-79 (IKRKKIRESA…LRSQMGESNT (77 aa)) enclose the REM-1 domain. In terms of domain architecture, PH spans 285–392 (DEAMMGFLNQ…WMEAFWQHFY (108 aa)). Disordered stretches follow at residues 483–530 (RNKP…SDKE) and 574–612 (ENKA…QSQV). Over residues 486–498 (PPLLSSDDPSTSS) the composition is skewed to low complexity.

This is Rhotekin-2 (rtkn2) from Xenopus laevis (African clawed frog).